A 269-amino-acid polypeptide reads, in one-letter code: Tryptophan synthase alpha chain (269 aa).

Residues E45 and D56 each act as proton acceptor in the active site.

The protein belongs to the TrpA family. Tetramer of two alpha and two beta chains.

It carries out the reaction (1S,2R)-1-C-(indol-3-yl)glycerol 3-phosphate + L-serine = D-glyceraldehyde 3-phosphate + L-tryptophan + H2O. Its pathway is amino-acid biosynthesis; L-tryptophan biosynthesis; L-tryptophan from chorismate: step 5/5. In terms of biological role, the alpha subunit is responsible for the aldol cleavage of indoleglycerol phosphate to indole and glyceraldehyde 3-phosphate. The chain is Tryptophan synthase alpha chain from Shouchella clausii (strain KSM-K16) (Alkalihalobacillus clausii).